Reading from the N-terminus, the 542-residue chain is Signal peptide peptidase-like 5 (542 aa).

The signal sequence occupies residues 1 to 23 (MAAATAAVFALLMASALAGAAAG). Residues 24 to 192 (GDIVHHDDEA…PDRPVVDTAE (169 aa)) lie on the Lumenal side of the membrane. N79 and N145 each carry an N-linked (GlcNAc...) asparagine glycan. The PA domain maps to 92 to 167 (CTSPKEKVSG…LPRDAGFALH (76 aa)). A helical transmembrane segment spans residues 193–213 (VFLWLMAVGTVLCASYWSAWS). Topologically, residues 214–245 (AREALCEQEKLLKDGREVLLNVENGSSSGMID) are cytoplasmic. The chain crosses the membrane as a helical span at residues 246–266 (INVASAIMFVVVASCFLIMLY). Topologically, residues 267 to 275 (KMMSSWFVE) are lumenal. The chain crosses the membrane as a helical span at residues 276 to 296 (LLVVIFCVGGVEGLQTCLVAL). Residues 297-316 (LSRWFRAASESFFKVPFFGA) are Cytoplasmic-facing. A helical membrane pass occupies residues 317-337 (VSYLTLAVSPFCIVFAVLWAV). Residues 338-342 (HRHFT) lie on the Lumenal side of the membrane. Residues 343-363 (YAWIGQDILGIALIITVIQIV) traverse the membrane as a helical segment. Residues 364–367 (RVPN) lie on the Cytoplasmic side of the membrane. A helical transmembrane segment spans residues 368–388 (LKVGSVLLSCAFFYDIFWVFV). D382 is an active-site residue. Topologically, residues 389 to 426 (SKRWFHESVMIVVARGDKTDEDGVPMLLKIPRMFDPWG) are lumenal. Residues 427-447 (GYSIIGFGDILLPGLLVAFAL) traverse the membrane as a helical segment. Residue D435 is part of the active site. The Cytoplasmic segment spans residues 448–459 (RYDWAAKKSLQT). A helical membrane pass occupies residues 460–480 (GYFLWSMVAYGSGLLITYVAL). Residues 481 to 486 (NLMDGH) lie on the Lumenal side of the membrane. Residues 487–507 (GQPALLYIVPFTLGALISLGW) traverse the membrane as a helical segment. Positions 489 to 491 (PAL) match the PAL motif. Residues 508–542 (KRGELWNLWSKGEPERVCPHHMHMQPQPKTPPLVQ) lie on the Cytoplasmic side of the membrane.

The protein belongs to the peptidase A22B family. Post-translationally, glycosylated.

It is found in the endosome membrane. Its function is as follows. Intramembrane-cleaving aspartic protease (I-CLiP) that cleaves type II membrane signal peptides in the hydrophobic plane of the membrane. The protein is Signal peptide peptidase-like 5 (SPPL5) of Oryza sativa subsp. japonica (Rice).